The following is a 152-amino-acid chain: Nucleoside diphosphate kinase A (152 aa).

Lysine 12, phenylalanine 60, arginine 88, and threonine 94 together coordinate ATP. Lysine 100 participates in a covalent cross-link: Glycyl lysine isopeptide (Lys-Gly) (interchain with G-Cter in ubiquitin). Arginine 105 and asparagine 115 together coordinate ATP. Residue histidine 118 is the Pros-phosphohistidine intermediate of the active site. Phosphoserine is present on residues serine 120, serine 122, and serine 125.

It belongs to the NDK family. As to quaternary structure, hexamer of two different chains: An and B (A6, A5B, A4B2, A3B3, A2B4, AB5, B6). Interacts with PRUNE1. Component of the SET complex, composed of at least ANP32A, APEX1, HMGB2, NME1, SET and TREX1. Within this complex, interacts directly with SET. Also interacts with TREX1, but only following translocation to the nucleus. Mg(2+) serves as cofactor.

The protein localises to the cytoplasm. The protein resides in the nucleus. The catalysed reaction is a 2'-deoxyribonucleoside 5'-diphosphate + ATP = a 2'-deoxyribonucleoside 5'-triphosphate + ADP. It catalyses the reaction a ribonucleoside 5'-diphosphate + ATP = a ribonucleoside 5'-triphosphate + ADP. Autophosphorylation at His-118 increases serine/threonine protein kinase activity of the enzyme. Interaction with the SET complex inhibits exonuclease activity. Major role in the synthesis of nucleoside triphosphates other than ATP. The ATP gamma phosphate is transferred to the NDP beta phosphate via a ping-pong mechanism, using a phosphorylated active-site intermediate. Possesses nucleoside-diphosphate kinase, serine/threonine-specific protein kinase, geranyl and farnesyl pyrophosphate kinase, histidine protein kinase and 3'-5' exonuclease activities. Involved in cell proliferation, differentiation and development, signal transduction, G protein-coupled receptor endocytosis, and gene expression. Required for neural development including neural patterning and cell fate determination. During GZMA-mediated cell death, works in concert with TREX1. NME1 nicks one strand of DNA and TREX1 removes bases from the free 3' end to enhance DNA damage and prevent DNA end reannealing and rapid repair. The chain is Nucleoside diphosphate kinase A (Nme1) from Rattus norvegicus (Rat).